The sequence spans 238 residues: UPF0173 metal-dependent hydrolase Helmi_16730 (238 aa).

It belongs to the UPF0173 family.

In Heliobacterium modesticaldum (strain ATCC 51547 / Ice1), this protein is UPF0173 metal-dependent hydrolase Helmi_16730.